Reading from the N-terminus, the 904-residue chain is Toll-like receptor 3 (904 aa).

The N-terminal stretch at 1-23 (MRQTLPCIYFWGGLLPFGMLCAS) is a signal peptide. Residues 24–51 (STTKCTVSHEVADCSHLKLTQVPDDLPT) form the LRRNT domain. Topologically, residues 24–704 (STTKCTVSHE…SCKDSAPFEL (681 aa)) are lumenal. Cysteine 28 and cysteine 37 are joined by a disulfide. Residues asparagine 52, asparagine 57, and asparagine 70 are each glycosylated (N-linked (GlcNAc...) asparagine). LRR repeat units lie at residues 52–73 (NITVLNLTHNQLRRLPAANFTR), 76–97 (QLTSLDVGFNTISKLEPELCQK), 100–121 (MLKVLNLQHNELSQLSDKTFAF), 124–145 (NLTELHLMSNSIQKIKNNPFVK), 148–168 (NLITLDLSHNGLSSTKLGTQV), and 172–193 (NLQELLLSNNKIQALKSEELDI). Cysteine 95 and cysteine 122 are oxidised to a cystine. A glycan (N-linked (GlcNAc...) asparagine) is linked at asparagine 124. Residue asparagine 196 is glycosylated (N-linked (GlcNAc...) asparagine). LRR repeat units lie at residues 198 to 219 (SLKKLELSSNQIKEFSPGCFHA) and 222 to 244 (RLFGLFLNNVQLGPSLTEKLCLE). N-linked (GlcNAc...) asparagine glycosylation is found at asparagine 247, asparagine 252, asparagine 265, asparagine 275, and asparagine 291. 14 LRR repeats span residues 249 to 270 (SIRNLSLSNSQLSTTSNTTFLG), 275 to 296 (NLTMLDLSYNNLNVVGNDSFAW), 299 to 320 (QLEYFFLEYNNIQHLFSHSLHG), 323 to 344 (NVRYLNLKRSFTKQSISLASLP), 356 to 377 (CLEHLNMEDNDIPGIKSNMFTG), 380 to 400 (NLKYLSLSNSFTSLRTLTNET), 408 to 429 (PLHILNLTKNKISKIESDAFSW), 432 to 454 (HLEVLDLGLNEIGQELTGQEWRG), 465 to 486 (YNKYLQLTRNSFALVPSLQRLM), 507 to 528 (NLTILDLSNNNIANINDDMLEG), 531 to 552 (KLEILDLQHNNLARLWKHANPG), 563 to 584 (HLHILNLESNGFDEIPVEVFKD), 587 to 608 (ELKIIDLGLNNLNTLPASVFNN), and 611 to 632 (SLKSLNLQKNLITSVEKKVFGP). Residues asparagine 398 and asparagine 413 are each glycosylated (N-linked (GlcNAc...) asparagine). N-linked (GlcNAc...) asparagine glycosylation is present at asparagine 507. 2 N-linked (GlcNAc...) asparagine glycosylation sites follow: asparagine 636 and asparagine 662. The region spanning 645-698 (NPFDCTCESIAWFVNWINETHTNIPELSSHYLCNTPPHYHGFPVRLFDTSSCKD) is the LRRCT domain. Disulfide bonds link cysteine 649–cysteine 677 and cysteine 651–cysteine 696. A helical transmembrane segment spans residues 705-725 (FFMINTSILLIFIFIVLLIHF). Topologically, residues 726–904 (EGWRISFYWN…VALGSKNSVH (179 aa)) are cytoplasmic. Positions 754–897 (FEYAAYIIHA…AFRHKLQVAL (144 aa)) constitute a TIR domain. The residue at position 759 (tyrosine 759) is a Phosphotyrosine. Glycyl lysine isopeptide (Lys-Gly) (interchain with G-Cter in ubiquitin) cross-links involve residues lysine 765, lysine 812, and lysine 831. Tyrosine 858 is subject to Phosphotyrosine.

The protein belongs to the Toll-like receptor family. As to quaternary structure, monomer and homodimer; dimerization is triggered by ligand-binding, the signaling unit is composed of one ds-RNA of around 40 bp and two TLR3 molecules, and lateral clustering of signaling units along the length of the ds-RNA ligand is required for TLR3 signal transduction. Interacts (via transmembrane domain) with UNC93B1; the interaction is required for transport from the ER to the endosomes. Interacts with SRC; upon binding of double-stranded RNA. Interacts with TICAM1 (via the TIR domain) in response to poly(I:C) and this interaction is enhanced in the presence of WDFY1. The tyrosine-phosphorylated form (via TIR domain) interacts with WDFY1 (via WD repeat 2) in response to poly(I:C). Post-translationally, heavily N-glycosylated, except on that part of the surface of the ectodomain that is involved in ligand binding. In terms of processing, TLR3 signaling requires a proteolytic cleavage mediated by cathepsins CTSB and CTSH, the cleavage occurs between amino acids 252 and 346. The cleaved form of TLR3 is the predominant form found in endosomes. Ubiquitinated by TRIM3; leading to recognition and sorting of polyubiquitinated TLR3 by the ESCRT complexes. Ubiquitinated by ZNRF1 via 'Lys-63'-linked ubiquitin chains; leading to TLR3 lysosomal trafficking and degradation. Ubiquitinated by RNF170 at Lys-765 via 'Lys-48'-linked ubiquitin chains; leading to TLR3 proteasomal degradation. Expressed at high level in placenta and pancreas. Also detected in CD11c+ immature dendritic cells. Only expressed in dendritic cells and not in other leukocytes, including monocyte precursors. TLR3 is the TLR that is expressed most strongly in the brain, especially in astrocytes, glia, and neurons.

The protein resides in the endoplasmic reticulum membrane. It localises to the endosome membrane. It is found in the early endosome. Its function is as follows. Key component of innate and adaptive immunity. TLRs (Toll-like receptors) control host immune response against pathogens through recognition of molecular patterns specific to microorganisms. TLR3 is a nucleotide-sensing TLR which is activated by double-stranded RNA, a sign of viral infection. Acts via the adapter TRIF/TICAM1, leading to NF-kappa-B activation, IRF3 nuclear translocation, cytokine secretion and the inflammatory response. This Homo sapiens (Human) protein is Toll-like receptor 3.